The sequence spans 316 residues: CD276 antigen (316 aa).

Positions 1–28 are cleaved as a signal peptide; it reads MLRGWGGPSVGVSMGTALGVLCLCLTGA. The Ig-like V-type domain occupies 29–139; that stretch reads VEVQVSEDPV…DSAAVSLQVA (111 aa). Over 29–248 the chain is Extracellular; that stretch reads VEVQVSEDPV…GQPMTFPPEA (220 aa). Asn104, Asn189, and Asn215 each carry an N-linked (GlcNAc...) asparagine glycan. Positions 145-238 constitute an Ig-like C2-type domain; that stretch reads PSMTLEPNKD…QDAHGSVTIT (94 aa). A disulfide bridge links Cys165 with Cys220. A helical transmembrane segment spans residues 249–269; sequence LWVTVGLSVCLVILLVALAFV. Over 270-316 the chain is Cytoplasmic; it reads CWRKIKQSCEEENAGAEDQDGDGEGSKTALRPLKHSENKEDDGQEIA. The span at 281–292 shows a compositional bias: acidic residues; sequence ENAGAEDQDGDG. A disordered region spans residues 281-316; it reads ENAGAEDQDGDGEGSKTALRPLKHSENKEDDGQEIA.

The protein belongs to the immunoglobulin superfamily. BTN/MOG family. As to quaternary structure, interacts with TREML2 and this interaction enhances T-cell activation.

It is found in the membrane. Modulates T-cell-mediated immune responses and the development of acute and chronic transplant rejection. May play a positive regulatory role in bone formation and has a dual role in the bone-immune interface. Induces antitumor immunity as it activates both acquired and innate immunity leading to natural killer cell and CD8 T-cell dependent killing of tumor cells. This is CD276 antigen (Cd276) from Rattus norvegicus (Rat).